Reading from the N-terminus, the 425-residue chain is Serine--tRNA ligase (425 aa).

228–230 contributes to the L-serine binding site; that stretch reads TAE. 259 to 261 contacts ATP; sequence RSE. An L-serine-binding site is contributed by Glu-282. 346-349 is a binding site for ATP; sequence EIAS. An L-serine-binding site is contributed by Ser-382.

This sequence belongs to the class-II aminoacyl-tRNA synthetase family. Type-1 seryl-tRNA synthetase subfamily. As to quaternary structure, homodimer. The tRNA molecule binds across the dimer.

Its subcellular location is the cytoplasm. It carries out the reaction tRNA(Ser) + L-serine + ATP = L-seryl-tRNA(Ser) + AMP + diphosphate + H(+). The catalysed reaction is tRNA(Sec) + L-serine + ATP = L-seryl-tRNA(Sec) + AMP + diphosphate + H(+). It functions in the pathway aminoacyl-tRNA biosynthesis; selenocysteinyl-tRNA(Sec) biosynthesis; L-seryl-tRNA(Sec) from L-serine and tRNA(Sec): step 1/1. Functionally, catalyzes the attachment of serine to tRNA(Ser). Is also able to aminoacylate tRNA(Sec) with serine, to form the misacylated tRNA L-seryl-tRNA(Sec), which will be further converted into selenocysteinyl-tRNA(Sec). In Rickettsia rickettsii (strain Iowa), this protein is Serine--tRNA ligase.